A 165-amino-acid polypeptide reads, in one-letter code: Lipoprotein signal peptidase (165 aa).

The next 4 helical transmembrane spans lie at 11-31 (YWVL…AVLS), 41-61 (VIPS…FSFL), 64-84 (QGGW…AYLV), and 92-112 (FATL…GNVI). Residues Asp122 and Asp140 contribute to the active site. A helical membrane pass occupies residues 132–152 (FYPAFNIADSFICVGAVLAVL).

The protein belongs to the peptidase A8 family.

It is found in the cell inner membrane. The catalysed reaction is Release of signal peptides from bacterial membrane prolipoproteins. Hydrolyzes -Xaa-Yaa-Zaa-|-(S,diacylglyceryl)Cys-, in which Xaa is hydrophobic (preferably Leu), and Yaa (Ala or Ser) and Zaa (Gly or Ala) have small, neutral side chains.. The protein operates within protein modification; lipoprotein biosynthesis (signal peptide cleavage). In terms of biological role, this protein specifically catalyzes the removal of signal peptides from prolipoproteins. The chain is Lipoprotein signal peptidase from Neisseria meningitidis serogroup A / serotype 4A (strain DSM 15465 / Z2491).